We begin with the raw amino-acid sequence, 557 residues long: Coiled-coil domain-containing protein 22 homolog (557 aa).

Coiled-coil stretches lie at residues 260–350 (RLGQ…LQSQ) and 489–554 (ELTA…AGRN).

The protein belongs to the CCDC22 family.

The polypeptide is Coiled-coil domain-containing protein 22 homolog (Anopheles gambiae (African malaria mosquito)).